Consider the following 232-residue polypeptide: Ureidoacrylate amidohydrolase RutB (232 aa).

The Proton acceptor role is filled by aspartate 26. Residue lysine 135 is part of the active site. Cysteine 168 functions as the Nucleophile in the catalytic mechanism.

The protein belongs to the isochorismatase family. RutB subfamily.

It catalyses the reaction (Z)-3-ureidoacrylate + H2O + H(+) = (Z)-3-aminoacrylate + NH4(+) + CO2. The catalysed reaction is (Z)-3-ureidoacrylate + H2O = (Z)-3-aminoacrylate + carbamate + H(+). It carries out the reaction (Z)-2-methylureidoacrylate + H2O + H(+) = (Z)-2-methylaminoacrylate + NH4(+) + CO2. Hydrolyzes ureidoacrylate to form aminoacrylate and carbamate. The carbamate hydrolyzes spontaneously, thereby releasing one of the nitrogen atoms of the pyrimidine ring as ammonia and one of its carbon atoms as CO2. This is Ureidoacrylate amidohydrolase RutB from Cronobacter sakazakii (strain ATCC BAA-894) (Enterobacter sakazakii).